Reading from the N-terminus, the 341-residue chain is Tetraacyldisaccharide 4'-kinase (341 aa).

An ATP-binding site is contributed by 54 to 61 (TVGGAGKT).

It belongs to the LpxK family.

It catalyses the reaction a lipid A disaccharide + ATP = a lipid IVA + ADP + H(+). It functions in the pathway glycolipid biosynthesis; lipid IV(A) biosynthesis; lipid IV(A) from (3R)-3-hydroxytetradecanoyl-[acyl-carrier-protein] and UDP-N-acetyl-alpha-D-glucosamine: step 6/6. In terms of biological role, transfers the gamma-phosphate of ATP to the 4'-position of a tetraacyldisaccharide 1-phosphate intermediate (termed DS-1-P) to form tetraacyldisaccharide 1,4'-bis-phosphate (lipid IVA). This Brucella suis (strain ATCC 23445 / NCTC 10510) protein is Tetraacyldisaccharide 4'-kinase.